The sequence spans 106 residues: MNKIRKGDQIIVLTGRDKGKQGVVSARKDDSHLLIDGINMVKKHVKPNPMKGTTGGIVEKAMPIHQSNVAIFNAATGKADRVGIKVQADGTRVRVFKSSGAEIKAA.

The protein belongs to the universal ribosomal protein uL24 family. As to quaternary structure, part of the 50S ribosomal subunit.

In terms of biological role, one of two assembly initiator proteins, it binds directly to the 5'-end of the 23S rRNA, where it nucleates assembly of the 50S subunit. Its function is as follows. One of the proteins that surrounds the polypeptide exit tunnel on the outside of the subunit. The polypeptide is Large ribosomal subunit protein uL24 (Delftia acidovorans (strain DSM 14801 / SPH-1)).